A 275-amino-acid chain; its full sequence is Adenosylcobinamide-GDP ribazoletransferase (275 aa).

The next 6 membrane-spanning stretches (helical) occupy residues 53–73, 113–133, 144–164, 204–224, 225–245, and 253–273; these read WFVFLLFQFLFGPTIAFTISL, VGSFGAAGISLLLLLKVLGVS, LPFTFGSSAQIHLLSVWLYFV, FACIFGVTPFLALVYLHPYFL, LSLLCIIPSFVYMFSLMKRWI, and LGAVQQVVETCIWISGVFVWI.

It belongs to the CobS family. Requires Mg(2+) as cofactor.

The protein resides in the cell inner membrane. The catalysed reaction is alpha-ribazole + adenosylcob(III)inamide-GDP = adenosylcob(III)alamin + GMP + H(+). The enzyme catalyses alpha-ribazole 5'-phosphate + adenosylcob(III)inamide-GDP = adenosylcob(III)alamin 5'-phosphate + GMP + H(+). It functions in the pathway cofactor biosynthesis; adenosylcobalamin biosynthesis; adenosylcobalamin from cob(II)yrinate a,c-diamide: step 7/7. Its function is as follows. Joins adenosylcobinamide-GDP and alpha-ribazole to generate adenosylcobalamin (Ado-cobalamin). Also synthesizes adenosylcobalamin 5'-phosphate from adenosylcobinamide-GDP and alpha-ribazole 5'-phosphate. The chain is Adenosylcobinamide-GDP ribazoletransferase from Leptospira biflexa serovar Patoc (strain Patoc 1 / Ames).